Reading from the N-terminus, the 276-residue chain is 3,4-dihydroxyphenylacetate 2,3-dioxygenase (276 aa).

Requires Fe cation as cofactor.

The catalysed reaction is 3,4-dihydroxyphenylacetate + O2 = 2-hydroxy-5-carboxymethylmuconate semialdehyde + H(+). Its pathway is aromatic compound metabolism; 4-hydroxyphenylacetate degradation; pyruvate and succinate semialdehyde from 4-hydroxyphenylacetate: step 2/7. Its function is as follows. Transforms homoprotocatechuic acid (HPC) into 5-carboxymethyl-2-hydroxy-muconic semialdehyde (CHMS). The chain is 3,4-dihydroxyphenylacetate 2,3-dioxygenase (hpcB) from Escherichia coli.